The following is a 146-amino-acid chain: uncharacterized protein (146 aa).

A disordered region spans residues 87–121; that stretch reads SRSHHSTAKSAKSALSSDSGDGSDPDPEPETFPSA. Residues 94–106 show a composition bias toward low complexity; the sequence is AKSAKSALSSDSG.

This is an uncharacterized protein from Escherichia coli (strain K12).